We begin with the raw amino-acid sequence, 68 residues long: Protein SlyX homolog (68 aa).

Belongs to the SlyX family.

This chain is Protein SlyX homolog, found in Pseudomonas fluorescens (strain Pf0-1).